We begin with the raw amino-acid sequence, 151 residues long: Ubiquitin-conjugating enzyme E2-17 kDa (151 aa).

The 147-residue stretch at 4–150 folds into the UBC core domain; the sequence is PARRRLMRDF…VKACVEQSFI (147 aa). Cysteine 88 (glycyl thioester intermediate) is an active-site residue.

It belongs to the ubiquitin-conjugating enzyme family.

It localises to the nucleus. The catalysed reaction is S-ubiquitinyl-[E1 ubiquitin-activating enzyme]-L-cysteine + [E2 ubiquitin-conjugating enzyme]-L-cysteine = [E1 ubiquitin-activating enzyme]-L-cysteine + S-ubiquitinyl-[E2 ubiquitin-conjugating enzyme]-L-cysteine.. The protein operates within protein modification; protein ubiquitination. Functionally, E2 ubiquitin-conjugating enzyme that accepts ubiquitin from the ubiquitin-activating enzyme E1 and transfers it to a E3 ubiquitin-protein ligase. Required for postreplication repair of UV-damaged DNA. Involved in the negative regulation of the Ras/MAPK signaling pathway in the wing by acting with the putative E3 ligases poe, Kcmf1 and Ufd4 to mediate the ubiquitination and proteasomal degradation of rl/MAPK. Required for in mitophagy. The polypeptide is Ubiquitin-conjugating enzyme E2-17 kDa (Drosophila melanogaster (Fruit fly)).